The following is a 234-amino-acid chain: Phosphoribosylaminoimidazole-succinocarboxamide synthase (234 aa).

It belongs to the SAICAR synthetase family.

The catalysed reaction is 5-amino-1-(5-phospho-D-ribosyl)imidazole-4-carboxylate + L-aspartate + ATP = (2S)-2-[5-amino-1-(5-phospho-beta-D-ribosyl)imidazole-4-carboxamido]succinate + ADP + phosphate + 2 H(+). Its pathway is purine metabolism; IMP biosynthesis via de novo pathway; 5-amino-1-(5-phospho-D-ribosyl)imidazole-4-carboxamide from 5-amino-1-(5-phospho-D-ribosyl)imidazole-4-carboxylate: step 1/2. This is Phosphoribosylaminoimidazole-succinocarboxamide synthase from Staphylococcus epidermidis (strain ATCC 35984 / DSM 28319 / BCRC 17069 / CCUG 31568 / BM 3577 / RP62A).